Consider the following 215-residue polypeptide: Cytidylate kinase (215 aa).

10–18 (GPAASGKGT) contributes to the ATP binding site.

This sequence belongs to the cytidylate kinase family. Type 1 subfamily.

It localises to the cytoplasm. It catalyses the reaction CMP + ATP = CDP + ADP. The catalysed reaction is dCMP + ATP = dCDP + ADP. In Bartonella tribocorum (strain CIP 105476 / IBS 506), this protein is Cytidylate kinase.